The chain runs to 1914 residues: Diacylglycerol kinase eta (1914 aa).

Basic and acidic residues predominate over residues 1–10; it reads MSHLKLDTLH. The segment at 1 to 37 is disordered; sequence MSHLKLDTLHVQRSPRGSRRSSRSSGRSSACSSGSIS. Over residues 23-37 the composition is skewed to low complexity; it reads RSSGRSSACSSGSIS. The PH domain occupies 82–175; it reads AIIKEGFLLK…WLGSLKTATA (94 aa). 2 Phorbol-ester/DAG-type zinc fingers span residues 195 to 245 and 268 to 319; these read HHHW…IANC and PHQW…AVAC. Residues 350-486 form the DAGKc domain; the sequence is GNFSPLLVFV…DRWSIMVFEK (137 aa). Disordered stretches follow at residues 621–642, 783–805, 1016–1053, 1116–1135, and 1175–1216; these read EKDQINSKERRNSRSLRSSEKE, GANIDDAGNRLSPCSDGGENTPT, TLCSEHVGPPKPPRKKSLSALSRTQAHPRRRNSSPPRI, QHRGGDNDSEYPEHQQTPTN, and PNTI…TVSL. Polar residues predominate over residues 1175 to 1187; sequence PNTILTTSTSPTK. The region spanning 1851-1914 is the SAM domain; that stretch reads WSVNEVVTWL…LQAIKDLSEN (64 aa).

This sequence belongs to the eukaryotic diacylglycerol kinase family.

It is found in the cytoplasm. The catalysed reaction is a 1,2-diacyl-sn-glycerol + ATP = a 1,2-diacyl-sn-glycero-3-phosphate + ADP + H(+). Its function is as follows. Phosphorylates diacylglycerol (DAG) to generate phosphatidic acid (PA). This chain is Diacylglycerol kinase eta, found in Drosophila sechellia (Fruit fly).